The chain runs to 556 residues: Phenylalanine--tRNA ligase beta subunit (556 aa).

Residues 278–353 (LTPKRFEVEL…IAYGYNNIEP (76 aa)) form the B5 domain. Mg(2+)-binding residues include aspartate 331, aspartate 337, glutamate 340, and aspartate 341.

The protein belongs to the phenylalanyl-tRNA synthetase beta subunit family. Type 2 subfamily. In terms of assembly, tetramer of two alpha and two beta subunits. Mg(2+) is required as a cofactor.

It is found in the cytoplasm. It catalyses the reaction tRNA(Phe) + L-phenylalanine + ATP = L-phenylalanyl-tRNA(Phe) + AMP + diphosphate + H(+). This chain is Phenylalanine--tRNA ligase beta subunit, found in Pyrococcus abyssi (strain GE5 / Orsay).